Here is a 466-residue protein sequence, read N- to C-terminus: GTPase Der (466 aa).

2 consecutive EngA-type G domains span residues 3–166 (PVIA…PEIP) and 177–350 (IKIA…QSAT). GTP is bound by residues 9–16 (GRPNVGKS), 56–60 (DTGGI), 118–121 (NKID), 183–190 (GRPNVGKS), 230–234 (DTAGV), and 295–298 (NKWD). In terms of domain architecture, KH-like spans 351–435 (DRFSTNYLTR…PIRIEFRTTD (85 aa)). Residues 442–466 (KKSMTRQQFIQKRRKEERDRNNPRR) are disordered. Over residues 455 to 466 (RKEERDRNNPRR) the composition is skewed to basic and acidic residues.

The protein belongs to the TRAFAC class TrmE-Era-EngA-EngB-Septin-like GTPase superfamily. EngA (Der) GTPase family. As to quaternary structure, associates with the 50S ribosomal subunit.

In terms of biological role, GTPase that plays an essential role in the late steps of ribosome biogenesis. This Cellvibrio japonicus (strain Ueda107) (Pseudomonas fluorescens subsp. cellulosa) protein is GTPase Der.